The primary structure comprises 243 residues: tRNA (guanine-N(1)-)-methyltransferase (243 aa).

Residues Gly123 and 143-148 (LGDFVM) each bind S-adenosyl-L-methionine.

The protein belongs to the RNA methyltransferase TrmD family. As to quaternary structure, homodimer.

The protein localises to the cytoplasm. The catalysed reaction is guanosine(37) in tRNA + S-adenosyl-L-methionine = N(1)-methylguanosine(37) in tRNA + S-adenosyl-L-homocysteine + H(+). Its function is as follows. Specifically methylates guanosine-37 in various tRNAs. The polypeptide is tRNA (guanine-N(1)-)-methyltransferase (Ruegeria pomeroyi (strain ATCC 700808 / DSM 15171 / DSS-3) (Silicibacter pomeroyi)).